A 348-amino-acid chain; its full sequence is Phosphate acyltransferase (348 aa).

The protein belongs to the PlsX family. Homodimer. Probably interacts with PlsY.

The protein localises to the cytoplasm. The catalysed reaction is a fatty acyl-[ACP] + phosphate = an acyl phosphate + holo-[ACP]. It participates in lipid metabolism; phospholipid metabolism. Its function is as follows. Catalyzes the reversible formation of acyl-phosphate (acyl-PO(4)) from acyl-[acyl-carrier-protein] (acyl-ACP). This enzyme utilizes acyl-ACP as fatty acyl donor, but not acyl-CoA. This chain is Phosphate acyltransferase, found in Francisella philomiragia subsp. philomiragia (strain ATCC 25017 / CCUG 19701 / FSC 153 / O#319-036).